A 687-amino-acid chain; its full sequence is C-mannosyltransferase dpy-19 (687 aa).

The next 11 membrane-spanning stretches (helical) occupy residues 24–44 (GISG…VGFL), 170–190 (ITGV…LGVL), 191–211 (VSDS…NHGE), 223–243 (ESFA…IIKY), 253–273 (LLIS…FAFF), 276–296 (ICSI…AKTI), 303–323 (AFFI…ALYF), 324–344 (PSIW…GIRL), 347–367 (LYLL…KVGF), 415–435 (LSST…SWDF), and 454–474 (GEVI…VLIM).

This sequence belongs to the dpy-19 family.

Its subcellular location is the endoplasmic reticulum membrane. Functionally, C-mannosyltransferase that mediates C-mannosylation of tryptophan residues on target proteins such as unc-5 and mig-21. Mediates the attachment of alpha-mannose in C-C linkage to the C2 of the indole ring of tryptophan. C-mannosylation takes place in the endoplasmic reticulum and frequently found in thrombospondin (TSP) type-1 repeats and in the WSXWS motif of type I cytokine receptors. Required to orient neuroblasts QL and QR correctly on the anterior/posterior (A/P) axis: QL and QR are born in the same A/P position, but polarize and migrate left/right asymmetrically, QL migrates toward the posterior and QR migrates toward the anterior. Required with unc-40 to express mab-5 correctly in the Q cell descendants. The polypeptide is C-mannosyltransferase dpy-19 (Caenorhabditis briggsae).